The following is a 101-amino-acid chain: Urease subunit beta (101 aa).

This sequence belongs to the urease beta subunit family. In terms of assembly, heterotrimer of UreA (gamma), UreB (beta) and UreC (alpha) subunits. Three heterotrimers associate to form the active enzyme.

It localises to the cytoplasm. The catalysed reaction is urea + 2 H2O + H(+) = hydrogencarbonate + 2 NH4(+). It participates in nitrogen metabolism; urea degradation; CO(2) and NH(3) from urea (urease route): step 1/1. This chain is Urease subunit beta, found in Cupriavidus pinatubonensis (strain JMP 134 / LMG 1197) (Cupriavidus necator (strain JMP 134)).